We begin with the raw amino-acid sequence, 642 residues long: Chaperone protein DnaK (642 aa).

Residue Thr196 is modified to Phosphothreonine; by autocatalysis. A compositionally biased stretch (polar residues) spans 593 to 603 (STMYQTPSGDT). The disordered stretch occupies residues 593–642 (STMYQTPSGDTPPSEPETGASEESKGGDKTQGDGEVDAEYEVIDGNDKDK). The segment covering 614–624 (EESKGGDKTQG) has biased composition (basic and acidic residues). A compositionally biased stretch (acidic residues) spans 626-636 (GEVDAEYEVID).

Belongs to the heat shock protein 70 family.

Acts as a chaperone. This Chlorobium phaeobacteroides (strain BS1) protein is Chaperone protein DnaK.